The chain runs to 143 residues: MRVLVQRVSSAAVRVDGRVVGAIRPDGQGLVAFVGVTHGDDLDKARRLAEKLWNLRVLAGEKSASDMHAPILVISQFTLYADTAKGRRPSWNAAAPGAVAQPLIAAFAAALRQLGAHVEAGVFGAHMQVELVNDGPVTVMLEG.

The Gly-cisPro motif, important for rejection of L-amino acids signature appears at 135–136; sequence GP.

The protein belongs to the DTD family. As to quaternary structure, homodimer.

It localises to the cytoplasm. The catalysed reaction is glycyl-tRNA(Ala) + H2O = tRNA(Ala) + glycine + H(+). It catalyses the reaction a D-aminoacyl-tRNA + H2O = a tRNA + a D-alpha-amino acid + H(+). An aminoacyl-tRNA editing enzyme that deacylates mischarged D-aminoacyl-tRNAs. Also deacylates mischarged glycyl-tRNA(Ala), protecting cells against glycine mischarging by AlaRS. Acts via tRNA-based rather than protein-based catalysis; rejects L-amino acids rather than detecting D-amino acids in the active site. By recycling D-aminoacyl-tRNA to D-amino acids and free tRNA molecules, this enzyme counteracts the toxicity associated with the formation of D-aminoacyl-tRNA entities in vivo and helps enforce protein L-homochirality. The chain is D-aminoacyl-tRNA deacylase from Mycobacterium bovis (strain BCG / Pasteur 1173P2).